The sequence spans 129 residues: Phosphoribosyl-AMP cyclohydrolase (129 aa).

D76 is a Mg(2+) binding site. Residue C77 participates in Zn(2+) binding. Positions 78 and 80 each coordinate Mg(2+). Zn(2+)-binding residues include C97 and C104.

Belongs to the PRA-CH family. As to quaternary structure, homodimer. Requires Mg(2+) as cofactor. Zn(2+) serves as cofactor.

It is found in the cytoplasm. It carries out the reaction 1-(5-phospho-beta-D-ribosyl)-5'-AMP + H2O = 1-(5-phospho-beta-D-ribosyl)-5-[(5-phospho-beta-D-ribosylamino)methylideneamino]imidazole-4-carboxamide. It functions in the pathway amino-acid biosynthesis; L-histidine biosynthesis; L-histidine from 5-phospho-alpha-D-ribose 1-diphosphate: step 3/9. Catalyzes the hydrolysis of the adenine ring of phosphoribosyl-AMP. The polypeptide is Phosphoribosyl-AMP cyclohydrolase (Polaromonas sp. (strain JS666 / ATCC BAA-500)).